An 837-amino-acid chain; its full sequence is Cap-specific mRNA (nucleoside-2'-O-)-methyltransferase 1 (837 aa).

Residues 1 to 66 (MKRRTDPECT…EGKQPCSDDF (66 aa)) form a disordered region. Residues 2–18 (KRRTDPECTAPLKKQKR) carry the Bipartite nuclear localization signal motif. Phosphoserine is present on residues Ser27, Ser30, and Ser52. Positions 56 to 66 (TEGKQPCSDDF) are enriched in basic and acidic residues. The region spanning 86–132 (YNSVSQRLMAKMGFREGEGLGKYSQGRKDIVETSNQKGRRGLGLTLQ) is the G-patch domain. Ser90 carries the post-translational modification Phosphoserine. An N6-acetyllysine modification is found at Lys107. Residues 202–206 (KSVFD) and Arg217 contribute to the substrate site. Residues 230–449 (FFLNRAAMKM…ERYVVCKGLK (220 aa)) enclose the RrmJ-type SAM-dependent 2'-O-MTase domain. Residue Asn233 participates in S-adenosyl-L-methionine binding. The active site involves Lys238. S-adenosyl-L-methionine contacts are provided by residues 276-282 (CAGPGGF) and 334-335 (DI). Asp363 is an active-site residue. Residue 373–375 (NLQ) participates in substrate binding. Lys403 functions as the Proton acceptor in the catalytic mechanism. Residue Asn438 coordinates substrate. The tract at residues 726–834 (SGGTPKLSYT…VLSFIQSHNP (109 aa)) is interaction with POLR2A. One can recognise a WW domain in the interval 751–785 (RTVNEPWTMGFSKSNNRKFFYNKKTQKSVYALPTE).

Interacts with POLR2A (via C-terminus).

It is found in the nucleus. It carries out the reaction a 5'-end (N(7)-methyl 5'-triphosphoguanosine)-ribonucleoside in mRNA + S-adenosyl-L-methionine = a 5'-end (N(7)-methyl 5'-triphosphoguanosine)-(2'-O-methyl-ribonucleoside) in mRNA + S-adenosyl-L-homocysteine + H(+). Its function is as follows. S-adenosyl-L-methionine-dependent methyltransferase that mediates mRNA cap1 2'-O-ribose methylation to the 5'-cap structure of mRNAs. Methylates the ribose of the first nucleotide of a m(7)GpppG-capped mRNA and small nuclear RNA (snRNA) to produce m(7)GpppRm (cap1). Displays a preference for cap0 transcripts. Cap1 modification is linked to higher levels of translation. May be involved in the interferon response pathway. This Mus musculus (Mouse) protein is Cap-specific mRNA (nucleoside-2'-O-)-methyltransferase 1 (Cmtr1).